The following is a 652-amino-acid chain: Oligopeptide-binding protein AliB (652 aa).

The first 24 residues, 1-24 (MKKSKSKYLTLAGLVLGTGVLLSA), serve as a signal peptide directing secretion. The N-palmitoyl cysteine moiety is linked to residue cysteine 25. Cysteine 25 carries S-diacylglycerol cysteine lipidation.

This sequence belongs to the bacterial solute-binding protein 5 family.

It localises to the cell membrane. Part of the binding-protein-dependent transport system for oligopeptides; probably an oligopeptide binding protein. The polypeptide is Oligopeptide-binding protein AliB (aliB) (Streptococcus pneumoniae serotype 4 (strain ATCC BAA-334 / TIGR4)).